The following is a 559-amino-acid chain: Nucleoprotein (559 aa).

The interval 53 to 235 (MRKEKRTDSD…ITQEQSQINI (183 aa)) is binding site for the cap structure m7GTP. Mn(2+)-binding residues include Asp-378 and Glu-380. Zn(2+)-binding residues include Glu-388, Cys-495, His-498, and Cys-519. Residue Asp-523 coordinates Mn(2+).

Belongs to the arenaviridae nucleocapsid protein family. As to quaternary structure, homomultimerizes to form the nucleocapsid. Binds to viral genomic RNA. Interacts with glycoprotein G2. Interacts with protein Z; this interaction probably directs the encapsidated genome to budding sites. Interacts with protein L; this interaction does not interfere with Z-L interaction. Interacts with host IKBKE (via Protein kinase domain); the interaction inhibits IKBKE kinase activity.

Its subcellular location is the virion. The protein resides in the host cytoplasm. Its function is as follows. Encapsidates the genome, protecting it from nucleases. The encapsidated genomic RNA is termed the nucleocapsid (NC). Serves as template for viral transcription and replication. The increased presence of protein N in host cell does not seem to trigger the switch from transcription to replication as observed in other negative strain RNA viruses. Through the interaction with host IKBKE, strongly inhibits the phosphorylation and nuclear translocation of host IRF3, a protein involved in interferon activation pathway, leading to the inhibition of interferon-beta and IRF3-dependent promoters activation. Also encodes a functional 3'-5' exoribonuclease that degrades preferentially dsRNA substrates and thereby participates in the suppression of interferon induction. The chain is Nucleoprotein from Sooretamys angouya (Paraguayan rice rat).